The chain runs to 416 residues: Tyrosine--tRNA ligase (416 aa).

Tyrosine 39 is a binding site for L-tyrosine. Positions 44–53 (CTAPSLHAGH) match the 'HIGH' region motif. L-tyrosine-binding residues include tyrosine 176 and glutamine 180. The 'KMSKS' region signature appears at 236–240 (KMGKT). Residue lysine 239 coordinates ATP. The S4 RNA-binding domain occupies 349–414 (ISLVDLLHDT…AGKKRHIKVV (66 aa)).

Belongs to the class-I aminoacyl-tRNA synthetase family. TyrS type 1 subfamily. As to quaternary structure, homodimer.

It is found in the cytoplasm. The enzyme catalyses tRNA(Tyr) + L-tyrosine + ATP = L-tyrosyl-tRNA(Tyr) + AMP + diphosphate + H(+). In terms of biological role, catalyzes the attachment of tyrosine to tRNA(Tyr) in a two-step reaction: tyrosine is first activated by ATP to form Tyr-AMP and then transferred to the acceptor end of tRNA(Tyr). The protein is Tyrosine--tRNA ligase of Wolbachia pipientis wMel.